The following is a 171-amino-acid chain: Inosine/xanthosine triphosphatase (171 aa).

Residue 8–13 (TTNPAK) coordinates substrate. Mg(2+)-binding residues include E38 and Q68.

Belongs to the YjjX NTPase family. As to quaternary structure, homodimer. Requires Mg(2+) as cofactor. The cofactor is Mn(2+).

It catalyses the reaction XTP + H2O = XDP + phosphate + H(+). The enzyme catalyses ITP + H2O = IDP + phosphate + H(+). In terms of biological role, phosphatase that hydrolyzes non-canonical purine nucleotides such as XTP and ITP to their respective diphosphate derivatives. Probably excludes non-canonical purines from DNA/RNA precursor pool, thus preventing their incorporation into DNA/RNA and avoiding chromosomal lesions. The chain is Inosine/xanthosine triphosphatase from Citrobacter koseri (strain ATCC BAA-895 / CDC 4225-83 / SGSC4696).